Consider the following 748-residue polypeptide: Long-chain-alcohol oxidase FAO4B (748 aa).

Residues 1 to 18 are compositionally biased toward basic residues; that stretch reads MEDVRRRNRGHPLLRSKK. Residues 1 to 25 form a disordered region; that stretch reads MEDVRRRNRGHPLLRSKKRGEGYNH. 2 helical membrane passes run 89 to 109 and 140 to 160; these read IILMILSFRFGTLLLCGSLCL and FLLPFRITFFLAKFYTLFYFF. Position 238-253 (238-253) interacts with FAD; the sequence is CDAVVVGSGSGGGVAA. Histidine 679 acts as the Proton acceptor in catalysis.

It belongs to the GMC oxidoreductase family.

The protein resides in the membrane. It carries out the reaction a long-chain primary fatty alcohol + O2 = a long-chain fatty aldehyde + H2O2. In terms of biological role, long-chain fatty alcohol oxidase involved in the omega-oxidation pathway of lipid degradation. The polypeptide is Long-chain-alcohol oxidase FAO4B (FAO4B) (Arabidopsis thaliana (Mouse-ear cress)).